The sequence spans 135 residues: Beta/delta-urticatoxin-Ui2a (135 aa).

The signal sequence occupies residues 1–18 (MGAIVLVAIMALVASSSA). Positions 19 to 72 (FSDDEQNMMNAEGEKGIRSYSAADDVSDMIESLFVNSGNRNLVLMMLSGRPQPN) are excised as a propeptide. 6 cysteine pairs are disulfide-bonded: C75–C92, C82–C97, C91–C105, C107–C121, C114–C126, and C120–C134.

It belongs to the urticatoxin-2 family. As to expression, expressed in trichomes, that are stiff epidermal hairs located on the surface of petioles and leaves.

It is found in the secreted. Its function is as follows. Plant defense neurotoxin that causes pain and systemic symptoms in mammals via modulation of voltage-gated sodium channels (Nav). Potent modulator of human Nav1.5/SCN5A (EC(50)=55 nM), Nav1.6/SCN8A (EC(50)=0.86 nM), and Nav1.7/SCN9A (EC(50)=208 nM), where it shifts the activation threshold to more negative potentials and delays fast inactivation. Also shifts the voltage-dependence of steady-state fast inactivation of Nav1.6/SCN8A, but not that of Nav1.5/SCN5A or Nav1.7/SCN9A. On Nav1.7/SCN9A, principally acts by binding to extracellular loops of domain IV (Nav site 3). In vivo, intraplantar injection into mice causes numerous dose-dependent, immediate, and long-lasting spontaneous pain behaviors, while no swelling is observed in the injected paw. At the highest doses tested, systemic symptoms including hypokinesia and hypersalivation are observed. In Urtica incisa (Scrub nettle), this protein is Beta/delta-urticatoxin-Ui2a.